We begin with the raw amino-acid sequence, 160 residues long: Glyoxalase domain-containing protein 5 (160 aa).

In terms of domain architecture, VOC spans 33–153 (RLDHLVLTVR…DQNLIEVSNY (121 aa)).

This sequence belongs to the glyoxalase I family.

The protein is Glyoxalase domain-containing protein 5 (glod5) of Xenopus tropicalis (Western clawed frog).